The chain runs to 638 residues: Threonine--tRNA ligase (638 aa).

Positions 1–61 (MPVITLPDGS…EHDARIEIVT (61 aa)) constitute a TGS domain. The interval 243–534 (DHRKIAKAQD…LIEEYAGHFP (292 aa)) is catalytic. The Zn(2+) site is built by Cys-334, His-385, and His-511.

It belongs to the class-II aminoacyl-tRNA synthetase family. In terms of assembly, homodimer. Requires Zn(2+) as cofactor.

The protein localises to the cytoplasm. The catalysed reaction is tRNA(Thr) + L-threonine + ATP = L-threonyl-tRNA(Thr) + AMP + diphosphate + H(+). Functionally, catalyzes the attachment of threonine to tRNA(Thr) in a two-step reaction: L-threonine is first activated by ATP to form Thr-AMP and then transferred to the acceptor end of tRNA(Thr). Also edits incorrectly charged L-seryl-tRNA(Thr). This is Threonine--tRNA ligase from Idiomarina loihiensis (strain ATCC BAA-735 / DSM 15497 / L2-TR).